A 91-amino-acid polypeptide reads, in one-letter code: Small ribosomal subunit protein uS19 (91 aa).

This sequence belongs to the universal ribosomal protein uS19 family.

Its function is as follows. Protein S19 forms a complex with S13 that binds strongly to the 16S ribosomal RNA. In Psychrobacter arcticus (strain DSM 17307 / VKM B-2377 / 273-4), this protein is Small ribosomal subunit protein uS19.